Here is a 60-residue protein sequence, read N- to C-terminus: U20-myrmicitoxin-Mri1a (60 aa).

The first 24 residues, 1-24, serve as a signal peptide directing secretion; it reads MKSVILLFAVIAIIVAVIIPAING. Positions 25–34 are excised as a propeptide; it reads ESSSNPSANA.

The protein belongs to the formicidae venom precursor-01 superfamily. Expressed by the venom gland.

The protein resides in the secreted. Functionally, induces paralysis 5 minutes after injection into blowflies (L.caesar), and then death within 24 hours. May have antimicrobial properties, like most ant linear peptides. This is U20-myrmicitoxin-Mri1a from Manica rubida (European giant red ant).